We begin with the raw amino-acid sequence, 239 residues long: 3,4-dihydroxyphthalate decarboxylase (239 aa).

Glu84 (proton donor/acceptor) is an active-site residue. A divalent metal cation contacts are provided by Glu84, His103, His105, and His171.

Belongs to the aldolase class II family. A divalent metal cation is required as a cofactor.

It catalyses the reaction 3,4-dihydroxyphthalate + H(+) = 3,4-dihydroxybenzoate + CO2. The protein operates within xenobiotic degradation; phthalate degradation. Its function is as follows. Catalyzes the decarboxylation of 3,4-dihydroxyphthalate to protocatechuate (3,4-dihydroxybenzoate) during phthalate metabolism. This chain is 3,4-dihydroxyphthalate decarboxylase, found in Terrabacter sp. (strain DBF63).